A 79-amino-acid chain; its full sequence is Small ribosomal subunit protein bS18 (79 aa).

This sequence belongs to the bacterial ribosomal protein bS18 family. As to quaternary structure, part of the 30S ribosomal subunit. Forms a tight heterodimer with protein bS6.

In terms of biological role, binds as a heterodimer with protein bS6 to the central domain of the 16S rRNA, where it helps stabilize the platform of the 30S subunit. In Streptococcus pneumoniae (strain Hungary19A-6), this protein is Small ribosomal subunit protein bS18.